A 327-amino-acid polypeptide reads, in one-letter code: Undecaprenyl-phosphate 4-deoxy-4-formamido-L-arabinose transferase (327 aa).

Helical transmembrane passes span 236-256 and 270-290; these read LSIF…LLVV and VFML…GMGL.

Belongs to the glycosyltransferase 2 family.

It localises to the cell inner membrane. The enzyme catalyses UDP-4-deoxy-4-formamido-beta-L-arabinose + di-trans,octa-cis-undecaprenyl phosphate = 4-deoxy-4-formamido-alpha-L-arabinopyranosyl di-trans,octa-cis-undecaprenyl phosphate + UDP. It participates in glycolipid biosynthesis; 4-amino-4-deoxy-alpha-L-arabinose undecaprenyl phosphate biosynthesis; 4-amino-4-deoxy-alpha-L-arabinose undecaprenyl phosphate from UDP-4-deoxy-4-formamido-beta-L-arabinose and undecaprenyl phosphate: step 1/2. It functions in the pathway bacterial outer membrane biogenesis; lipopolysaccharide biosynthesis. Its function is as follows. Catalyzes the transfer of 4-deoxy-4-formamido-L-arabinose from UDP to undecaprenyl phosphate. The modified arabinose is attached to lipid A and is required for resistance to polymyxin and cationic antimicrobial peptides. The protein is Undecaprenyl-phosphate 4-deoxy-4-formamido-L-arabinose transferase of Klebsiella pneumoniae (strain 342).